The sequence spans 251 residues: Octanoyltransferase (251 aa).

The BPL/LPL catalytic domain maps to 56–241 (AETPDEIWIV…NLDGASAAAD (186 aa)). Substrate is bound by residues 96-103 (RGGQITYH), 168-170 (ALG), and 181-183 (GLS). Cys-199 serves as the catalytic Acyl-thioester intermediate.

It belongs to the LipB family.

It localises to the cytoplasm. The enzyme catalyses octanoyl-[ACP] + L-lysyl-[protein] = N(6)-octanoyl-L-lysyl-[protein] + holo-[ACP] + H(+). The protein operates within protein modification; protein lipoylation via endogenous pathway; protein N(6)-(lipoyl)lysine from octanoyl-[acyl-carrier-protein]: step 1/2. In terms of biological role, catalyzes the transfer of endogenously produced octanoic acid from octanoyl-acyl-carrier-protein onto the lipoyl domains of lipoate-dependent enzymes. Lipoyl-ACP can also act as a substrate although octanoyl-ACP is likely to be the physiological substrate. This chain is Octanoyltransferase, found in Burkholderia vietnamiensis (strain G4 / LMG 22486) (Burkholderia cepacia (strain R1808)).